The chain runs to 499 residues: MGSHSVEFSVLVLFLVSFLLGSTSAEKLCSDNDGDNGCFRSRVLAAQRADRVKELPGQPPVKFRQYAGYVTVNETHGRALFYWFFEATQNPSKKPVLLWLNGGPGCSSIGFGAAEELGPFFPQNSSQPKLKLNPYSWNKAANLLFLESPVGVGFSYTNTSRDIKQLGDTVTARDSYNFLVNWFKRFPQYKSHDFYIAGESYAGHYVPQLSELIYKENKIASKKDFINLKGLMIGNALLDDETDQKGMIEYAWDHAVISDALYEKVNKNCDFKQKLVTKECNDALDEYFDVYKILDMYSLYAPKCVPTSTNSSTSHSVAGNRPLPAFRSILRPRLISHNEGWRRMAAGYDPCASEYTEKYMNRKDVQEALHANVTNISYPWTHCSDTVSFWSDAPASMLPTLRTLVSAGLRVWVFSGDTDGRIPVTATRYSLKKLGLKIVQDWTPWYTKLQVGGWTVEYDGLMFVTVRGAGHQVPTFKPREALQLIHHFLGNKKLPTFPF.

A signal peptide spans 1-25 (MGSHSVEFSVLVLFLVSFLLGSTSA). N-linked (GlcNAc...) asparagine glycans are attached at residues asparagine 73, asparagine 124, and asparagine 158. Disulfide bonds link cysteine 106/cysteine 383, cysteine 269/cysteine 280, and cysteine 304/cysteine 351. Serine 200 is a catalytic residue. N-linked (GlcNAc...) asparagine glycans are attached at residues asparagine 310, asparagine 372, and asparagine 375. Residues aspartate 419 and histidine 471 contribute to the active site.

This sequence belongs to the peptidase S10 family. As to expression, ubiquitous.

The protein resides in the secreted. In terms of biological role, probable carboxypeptidase. The sequence is that of Serine carboxypeptidase-like 34 (SCPL34) from Arabidopsis thaliana (Mouse-ear cress).